The following is a 133-amino-acid chain: MANHDPISDMLTRIRNASEKRHETTRIPASRMSRSIAKVLQKEGFIAQISEEGEGFKTQLVLELKYSGKHRHPTIRSMQRVSKPGLRIYKNTRGLPKILGGLGVAIISTSKGVMSDRDARKQGVGGEVLCYVY.

The disordered stretch occupies residues 1 to 29 (MANHDPISDMLTRIRNASEKRHETTRIPA). The span at 16–25 (NASEKRHETT) shows a compositional bias: basic and acidic residues.

It belongs to the universal ribosomal protein uS8 family. As to quaternary structure, part of the 30S ribosomal subunit. Contacts proteins S5 and S12.

Its function is as follows. One of the primary rRNA binding proteins, it binds directly to 16S rRNA central domain where it helps coordinate assembly of the platform of the 30S subunit. The protein is Small ribosomal subunit protein uS8 of Prochlorococcus marinus (strain MIT 9211).